Consider the following 462-residue polypeptide: Asparagine--tRNA ligase (462 aa).

It belongs to the class-II aminoacyl-tRNA synthetase family. As to quaternary structure, homodimer.

It is found in the cytoplasm. It carries out the reaction tRNA(Asn) + L-asparagine + ATP = L-asparaginyl-tRNA(Asn) + AMP + diphosphate + H(+). The protein is Asparagine--tRNA ligase of Borreliella burgdorferi (strain ATCC 35210 / DSM 4680 / CIP 102532 / B31) (Borrelia burgdorferi).